Here is a 129-residue protein sequence, read N- to C-terminus: MKYFVVALALVAAFACIAESKPAESEHELAEVEEENELADLEDAVWLEHLADLSDLEEARGFFGNTWKKIKGKADKIMLKKAVKIMVKKEGISKEEAQAKVDAMSKKQIRLYVLKHYGKKALQKASEKL.

Residues 1 to 20 (MKYFVVALALVAAFACIAES) form the signal peptide. Residues 21-60 (KPAESEHELAEVEEENELADLEDAVWLEHLADLSDLEEAR) constitute a propeptide that is removed on maturation. Positions 57-60 (EEAR) match the Processing quadruplet motif motif.

Post-translationally, cleavage of the propeptide depends on the processing quadruplet motif (XXXR, with at least one of X being E). As to expression, expressed by the venom gland.

The protein resides in the secreted. In terms of biological role, insecticidal, cytolytic and antimicrobial peptide. Has insecticidal activity against the flesh fly S.carnaria. Has antibacterial activity against the Gram-negative bacteria E.coli. Forms voltage-dependent, ion-permeable channels in membranes. At high concentration causes cell membrane lysis. The sequence is that of M-zodatoxin-Lt8g (cit 1-8) from Lachesana tarabaevi (Spider).